Reading from the N-terminus, the 261-residue chain is 3-methyl-2-oxobutanoate hydroxymethyltransferase (261 aa).

Asp47 and Asp86 together coordinate Mg(2+). 3-methyl-2-oxobutanoate-binding positions include 47-48 (DS), Asp86, and Lys116. Glu118 contributes to the Mg(2+) binding site. The active-site Proton acceptor is the Glu186.

Belongs to the PanB family. In terms of assembly, homodecamer; pentamer of dimers. The cofactor is Mg(2+).

The protein resides in the cytoplasm. The enzyme catalyses 3-methyl-2-oxobutanoate + (6R)-5,10-methylene-5,6,7,8-tetrahydrofolate + H2O = 2-dehydropantoate + (6S)-5,6,7,8-tetrahydrofolate. It participates in cofactor biosynthesis; (R)-pantothenate biosynthesis; (R)-pantoate from 3-methyl-2-oxobutanoate: step 1/2. Its function is as follows. Catalyzes the reversible reaction in which hydroxymethyl group from 5,10-methylenetetrahydrofolate is transferred onto alpha-ketoisovalerate to form ketopantoate. The chain is 3-methyl-2-oxobutanoate hydroxymethyltransferase from Thermosynechococcus vestitus (strain NIES-2133 / IAM M-273 / BP-1).